Reading from the N-terminus, the 20-residue chain is Cytochrome c oxidase subunit 8B, mitochondrial (20 aa).

The disordered stretch occupies residues 1–20 (LSGKPAKXHLSVGEQAIAMT).

This sequence belongs to the cytochrome c oxidase VIII family. Component of the cytochrome c oxidase (complex IV, CIV), a multisubunit enzyme composed of 14 subunits. The complex is composed of a catalytic core of 3 subunits MT-CO1, MT-CO2 and MT-CO3, encoded in the mitochondrial DNA, and 11 supernumerary subunits COX4I, COX5A, COX5B, COX6A, COX6B, COX6C, COX7A, COX7B, COX7C, COX8 and NDUFA4, which are encoded in the nuclear genome. The complex exists as a monomer or a dimer and forms supercomplexes (SCs) in the inner mitochondrial membrane with NADH-ubiquinone oxidoreductase (complex I, CI) and ubiquinol-cytochrome c oxidoreductase (cytochrome b-c1 complex, complex III, CIII), resulting in different assemblies (supercomplex SCI(1)III(2)IV(1) and megacomplex MCI(2)III(2)IV(2)).

It is found in the mitochondrion inner membrane. Its pathway is energy metabolism; oxidative phosphorylation. Its function is as follows. Component of the cytochrome c oxidase, the last enzyme in the mitochondrial electron transport chain which drives oxidative phosphorylation. The respiratory chain contains 3 multisubunit complexes succinate dehydrogenase (complex II, CII), ubiquinol-cytochrome c oxidoreductase (cytochrome b-c1 complex, complex III, CIII) and cytochrome c oxidase (complex IV, CIV), that cooperate to transfer electrons derived from NADH and succinate to molecular oxygen, creating an electrochemical gradient over the inner membrane that drives transmembrane transport and the ATP synthase. Cytochrome c oxidase is the component of the respiratory chain that catalyzes the reduction of oxygen to water. Electrons originating from reduced cytochrome c in the intermembrane space (IMS) are transferred via the dinuclear copper A center (CU(A)) of subunit 2 and heme A of subunit 1 to the active site in subunit 1, a binuclear center (BNC) formed by heme A3 and copper B (CU(B)). The BNC reduces molecular oxygen to 2 water molecules using 4 electrons from cytochrome c in the IMS and 4 protons from the mitochondrial matrix. This chain is Cytochrome c oxidase subunit 8B, mitochondrial, found in Oncorhynchus mykiss (Rainbow trout).